Reading from the N-terminus, the 146-residue chain is Hemoglobin subunit beta (146 aa).

Valine 1 is subject to N-acetylvaline. The Globin domain maps to 2 to 146 (HLTGEEKSAV…VANALAHKYH (145 aa)). Phosphothreonine is present on threonine 12. The residue at position 44 (serine 44) is a Phosphoserine. Lysine 59 carries the N6-acetyllysine modification. Histidine 63 serves as a coordination point for heme b. Lysine 82 carries the N6-acetyllysine modification. Histidine 92 is a heme b binding site. Cysteine 93 bears the S-nitrosocysteine mark. N6-acetyllysine is present on lysine 144.

This sequence belongs to the globin family. As to quaternary structure, heterotetramer of two alpha chains and two beta chains. As to expression, red blood cells.

Involved in oxygen transport from the lung to the various peripheral tissues. In Nycticebus coucang (Slow loris), this protein is Hemoglobin subunit beta (HBB).